Here is a 541-residue protein sequence, read N- to C-terminus: Zinc finger protein 513 (541 aa).

The disordered stretch occupies residues 1–120 (MPRRKQSHPQ…ARGERPGPAC (120 aa)). The span at 44–55 (LEFEEEEEEEEG) shows a compositional bias: acidic residues. A phosphoserine mark is found at Ser-85 and Ser-96. Residues 103–115 (EPARGPGEARGER) show a composition bias toward basic and acidic residues. 8 consecutive C2H2-type zinc fingers follow at residues 150–172 (YSCR…MQTH), 178–200 (FRCG…TRTH), 206–228 (YRCP…QRTH), 360–382 (FACS…MKTH), 388–410 (FRCA…QRVH), 416–438 (YKCP…GRIH), 444–466 (FRCS…MLRH), and 472–494 (FRCA…QKVH). The tract at residues 492–541 (KVHGHGGAGGPGLSAPEGWAPPHSPPSVLSTRGSAALGATGSRALHTDSP) is disordered.

It belongs to the krueppel C2H2-type zinc-finger protein family. As to quaternary structure, binds DNA. Can associate with the proximal promoter regions of PAX6 and SP4, and their known targets including ARR3, RHO, OPN1MW2 and OPN1SW.

The protein localises to the nucleus. Functionally, transcriptional regulator that plays a role in retinal development and maintenance. The sequence is that of Zinc finger protein 513 (Znf513) from Rattus norvegicus (Rat).